A 615-amino-acid polypeptide reads, in one-letter code: Vitamin B12 transporter BtuB (615 aa).

A signal peptide spans 1 to 20 (MIKKISLLTALSVTAFSGWA). Residues 26–33 (NAMVVTAN) carry the TonB box motif. Residues 38-152 (PVNSVLAPTT…IGGVVNIITT (115 aa)) form the TBDR plug domain. Residues S85, N92, and 110–111 (IS) each bind cyanocob(III)alamin. Residues 155 to 615 (KNGTTLNAGV…EYYLTGSYTF (461 aa)) enclose the TBDR beta-barrel domain. The next 3 beta stranded transmembrane spans lie at 158–165 (TTLNAGVG), 169–178 (YQSYDAATQQ), and 184–195 (TTATLAGNYVYT). Residues D199, Q210, D212, and D214 each coordinate Ca(2+). 2 consecutive transmembrane segments (beta stranded) span residues 216 to 226 (FMSKSLYGTVE) and 231 to 247 (DQFS…NRTD). Residues Y248, D249, and D255 each contribute to the Ca(2+) site. Beta stranded transmembrane passes span 257–271 (RQLY…LRYQ), 273–290 (GIYS…KDYD), 303–319 (TLVD…NVLQ), 322–331 (AGTVSAGVDW), 347–363 (ESQN…QRFA), 365–375 (IVLEGSVRGDD), 379–394 (FGWH…WEFI), 397–411 (YSLI…KAPN), 429–438 (ESKQWESGVE), 444–453 (VIWRVSGYRN), 468–486 (VYEN…TASF), 490–505 (PVGH…SRNA), 513–525 (RRAK…QLDW), and 531–546 (DWSV…YDKD). T303 is a binding site for cyanocob(III)alamin. R513 provides a ligand contact to cyanocob(III)alamin. Position 547 (Y547) interacts with cyanocob(III)alamin. 3 consecutive transmembrane segments (beta stranded) span residues 559 to 573 (TVKL…LAAS), 586 to 597 (IANLFDKDYETA), and 603 to 615 (AGRE…SYTF). The short motif at 598–615 (YGYRTAGREYYLTGSYTF) is the TonB C-terminal box element.

Belongs to the TonB-dependent receptor family. BtuB (TC 1.B.14.3.1) subfamily.

It localises to the cell outer membrane. In terms of biological role, involved in the active translocation of vitamin B12 (cyanocobalamin) across the outer membrane to the periplasmic space. It derives its energy for transport by interacting with the trans-periplasmic membrane protein TonB. In Pectobacterium atrosepticum (strain SCRI 1043 / ATCC BAA-672) (Erwinia carotovora subsp. atroseptica), this protein is Vitamin B12 transporter BtuB.